Here is a 435-residue protein sequence, read N- to C-terminus: 5'-deoxyadenosine deaminase (435 aa).

Histidine 64 and histidine 66 together coordinate Zn(2+). Substrate is bound by residues glutamate 93 and histidine 185. Histidine 212 serves as a coordination point for Zn(2+). 2 residues coordinate substrate: glutamate 215 and aspartate 300. Aspartate 300 is a binding site for Zn(2+).

Belongs to the metallo-dependent hydrolases superfamily. MTA/SAH deaminase family. As to quaternary structure, homotetramer. It depends on Zn(2+) as a cofactor.

It catalyses the reaction 5'-deoxyadenosine + H2O + H(+) = 5'-deoxyinosine + NH4(+). It carries out the reaction S-adenosyl-L-homocysteine + H2O + H(+) = S-inosyl-L-homocysteine + NH4(+). The catalysed reaction is S-methyl-5'-thioadenosine + H2O + H(+) = S-methyl-5'-thioinosine + NH4(+). The enzyme catalyses adenosine + H2O + H(+) = inosine + NH4(+). The protein operates within amino-acid biosynthesis; S-adenosyl-L-methionine biosynthesis. Catalyzes the deamination of three SAM-derived enzymatic products, namely 5'-deoxyadenosine, S-adenosyl-L-homocysteine, and 5'-methylthioadenosine, to produce the inosine analogs. Can also deaminate adenosine. The preferred substrate for this enzyme is 5'-deoxyadenosine, but all these substrates are efficiently deaminated. Likely functions in a S-adenosyl-L-methionine (SAM) recycling pathway from S-adenosyl-L-homocysteine (SAH) produced from SAM-dependent methylation reactions. May also be involved in the recycling of 5'-deoxyadenosine, whereupon the 5'-deoxyribose moiety of 5'-deoxyinosine is further metabolized to deoxyhexoses used for the biosynthesis of aromatic amino acids in methanogens. This is 5'-deoxyadenosine deaminase from Methanobrevibacter smithii (strain ATCC 35061 / DSM 861 / OCM 144 / PS).